Reading from the N-terminus, the 179-residue chain is Dual-action ribosomal maturation protein DarP (179 aa).

The protein belongs to the DarP family.

Its subcellular location is the cytoplasm. Functionally, member of a network of 50S ribosomal subunit biogenesis factors which assembles along the 30S-50S interface, preventing incorrect 23S rRNA structures from forming. Promotes peptidyl transferase center (PTC) maturation. The protein is Dual-action ribosomal maturation protein DarP of Erwinia tasmaniensis (strain DSM 17950 / CFBP 7177 / CIP 109463 / NCPPB 4357 / Et1/99).